Consider the following 428-residue polypeptide: Glutamyl-tRNA reductase (428 aa).

Substrate is bound by residues 49–52 (TCNR), S109, 114–116 (EGQ), and Q120. C50 serves as the catalytic Nucleophile. 189 to 194 (GAGKMA) serves as a coordination point for NADP(+).

The protein belongs to the glutamyl-tRNA reductase family. As to quaternary structure, homodimer.

The catalysed reaction is (S)-4-amino-5-oxopentanoate + tRNA(Glu) + NADP(+) = L-glutamyl-tRNA(Glu) + NADPH + H(+). It functions in the pathway porphyrin-containing compound metabolism; protoporphyrin-IX biosynthesis; 5-aminolevulinate from L-glutamyl-tRNA(Glu): step 1/2. The protein operates within porphyrin-containing compound metabolism; chlorophyll biosynthesis. Its function is as follows. Catalyzes the NADPH-dependent reduction of glutamyl-tRNA(Glu) to glutamate 1-semialdehyde (GSA). The protein is Glutamyl-tRNA reductase of Rippkaea orientalis (strain PCC 8801 / RF-1) (Cyanothece sp. (strain PCC 8801)).